The sequence spans 234 residues: ATP-dependent dethiobiotin synthetase BioD (234 aa).

12–17 (DVGKTF) is a binding site for ATP. Thr-16 serves as a coordination point for Mg(2+). Residue Lys-37 is part of the active site. Residue Ser-41 coordinates substrate. ATP is bound by residues Asp-52, 118-121 (EGAG), and 178-179 (SQ). Mg(2+)-binding residues include Asp-52 and Glu-118.

Belongs to the dethiobiotin synthetase family. Homodimer. Mg(2+) serves as cofactor.

It localises to the cytoplasm. The enzyme catalyses (7R,8S)-7,8-diammoniononanoate + CO2 + ATP = (4R,5S)-dethiobiotin + ADP + phosphate + 3 H(+). The protein operates within cofactor biosynthesis; biotin biosynthesis; biotin from 7,8-diaminononanoate: step 1/2. Functionally, catalyzes a mechanistically unusual reaction, the ATP-dependent insertion of CO2 between the N7 and N8 nitrogen atoms of 7,8-diaminopelargonic acid (DAPA, also called 7,8-diammoniononanoate) to form a ureido ring. The protein is ATP-dependent dethiobiotin synthetase BioD of Phenylobacterium zucineum (strain HLK1).